A 65-amino-acid chain; its full sequence is Large ribosomal subunit protein bL35 (65 aa).

The interval 1–25 (MPKMKSHRGAAKRFKKTGTGKLKRA) is disordered.

This sequence belongs to the bacterial ribosomal protein bL35 family.

This is Large ribosomal subunit protein bL35 from Clostridium botulinum (strain Alaska E43 / Type E3).